We begin with the raw amino-acid sequence, 535 residues long: Probable glucomannan 4-beta-mannosyltransferase 14 (535 aa).

Residues 42-62 (QVVSVLLFVDAAYMAIVVAIV) traverse the membrane as a helical segment. The active site involves D131. Residues D193 and D195 each contribute to the substrate site. Residue D287 is part of the active site. Helical transmembrane passes span 366-386 (IVVHIFTFVFYCVILPATVIF), 403-423 (ITILNAIATPKSFYLILYWIL), 482-502 (IMVGMYLFICGYYDFVFGRTY), and 503-523 (LYVYLFLQSIAFFVVGVGYVG).

This sequence belongs to the glycosyltransferase 2 family. Plant cellulose synthase-like A subfamily.

Its subcellular location is the golgi apparatus membrane. It carries out the reaction GDP-mannose + (glucomannan)n = GDP + (glucomannan)n+1.. Its function is as follows. Probable mannan synthase which consists of a 4-beta-mannosyltransferase activity on mannan using GDP-mannose. The beta-1,4-mannan product is the backbone for galactomannan synthesis by galactomannan galactosyltransferase. Galactomannan is a noncellulosic polysaccharides of plant cell wall. The polypeptide is Probable glucomannan 4-beta-mannosyltransferase 14 (Arabidopsis thaliana (Mouse-ear cress)).